The following is a 126-amino-acid chain: Small ribosomal subunit protein uS13 (126 aa).

The tract at residues 101 to 126 (QKTKNNCRTRKGKKKTVANKKKKINK) is disordered.

This sequence belongs to the universal ribosomal protein uS13 family. In terms of assembly, part of the 30S ribosomal subunit. Forms a loose heterodimer with protein S19. Forms two bridges to the 50S subunit in the 70S ribosome.

Its function is as follows. Located at the top of the head of the 30S subunit, it contacts several helices of the 16S rRNA. In the 70S ribosome it contacts the 23S rRNA (bridge B1a) and protein L5 of the 50S subunit (bridge B1b), connecting the 2 subunits; these bridges are implicated in subunit movement. Contacts the tRNAs in the A and P-sites. The polypeptide is Small ribosomal subunit protein uS13 (Karelsulcia muelleri (strain GWSS) (Sulcia muelleri)).